Consider the following 172-residue polypeptide: Envelope protein UL45 (172 aa).

At 1–27 the chain is on the intravirion side; that stretch reads MPLRASEHAYRPLGPGTPPMRARLPAA. A helical; Signal-anchor for type II membrane protein membrane pass occupies residues 28 to 48; that stretch reads AWVGVGTIIGGVVIIAALVLV. At 49-172 the chain is on the virion surface side; sequence PSRASWALSP…TSTRNALGLP (124 aa).

The protein belongs to the herpesviridae HHV-1 UL45 family.

The protein localises to the virion membrane. Functionally, important virulence factor of HSV neurotropism. Seems to be required for glycoprotein B-induced fusion. Dispensable for growth in vitro. This chain is Envelope protein UL45, found in Human herpesvirus 1 (strain 17) (HHV-1).